A 623-amino-acid chain; its full sequence is NAD-dependent malic enzyme, mitochondrial (623 aa).

The transit peptide at methionine 1 to phenylalanine 31 directs the protein to the mitochondrion. Residues arginine 88 and arginine 122 each contribute to the fumarate site. The active-site Proton donor is serine 143. Residue arginine 196 coordinates (S)-malate. Arginine 196 provides a ligand contact to NAD(+). Lysine 214 acts as the Proton acceptor in catalysis. A divalent metal cation is bound by residues glutamate 285 and aspartate 286. Residue asparagine 289 coordinates NAD(+). Residue aspartate 309 coordinates a divalent metal cation. Alanine 345 provides a ligand contact to NAD(+). Positions 464 and 509 each coordinate (S)-malate.

Belongs to the malic enzymes family. In terms of assembly, heterodimer of two related subunits. It depends on Mg(2+) as a cofactor. Mn(2+) is required as a cofactor.

Its subcellular location is the mitochondrion matrix. The enzyme catalyses (S)-malate + NAD(+) = pyruvate + CO2 + NADH. The protein operates within photosynthesis; C4 acid pathway. This is NAD-dependent malic enzyme, mitochondrial from Amaranthus hypochondriacus (Prince-of-Wales feather).